A 474-amino-acid polypeptide reads, in one-letter code: Solute carrier family 49 member A3 (474 aa).

Residues 1-20 (MEGESAETEPLIQSSSAADR) form a disordered region. 12 helical membrane passes run 38–58 (WFILSVLCLLNCSNAMAWLTF), 69–89 (LCVSLPLVNWLSLVFVLAAVV), 105–126 (CSLIGSSWLNACGCVLRVCGVL), 134–154 (VFAVVMCGQTLCALAQPLVIF), 175–195 (LASMANTVGLLLANLLSPLIV), 201–221 (LFLLLLIYSIPAAVACLLATL), 258–278 (WILLLCFGSGIGIFTCFSTLL), 290–310 (GFAGVCGAVSIVCGVAGAFLL), 326–346 (ICMCLTSVSCSAFAVVSQLPA), 349–369 (VLLVLVCCCFGLFGYSVYPVG), 388–408 (LIFTSGQIQAALYLLLLQALA), and 428–448 (VPVLVMAGVCAISSCVFVVFF).

This sequence belongs to the major facilitator superfamily.

It is found in the membrane. The sequence is that of Solute carrier family 49 member A3 (slc49a3) from Danio rerio (Zebrafish).